We begin with the raw amino-acid sequence, 664 residues long: Putative carboxypeptidase suro-1 (664 aa).

The N-terminal stretch at 1–23 (MRYLCKSILLAVHTILLVGSVCC) is a signal peptide. Positions 24 to 110 (STDVHNTDDK…MSVPDVEKLI (87 aa)) are cleaved as a propeptide — activation peptide. The Peptidase M14 domain maps to 160-473 (DYASYADMVK…EGFREVVDAV (314 aa)). Residues His-219 and Glu-222 each contribute to the Zn(2+) site. Residues 219 to 222 (HARE), Arg-281, and 306 to 307 (NR) each bind substrate. His-361 provides a ligand contact to Zn(2+). 362–363 (SY) lines the substrate pocket. The active-site Proton donor/acceptor is Glu-437. The segment covering 512-543 (ASQAAGSTTRSTTTLKTSTTSVSTTSEATSPS) has biased composition (low complexity). Residues 512–590 (ASQAAGSTTR…TTTTEEEDVT (79 aa)) are disordered. The segment covering 564–573 (PTPPMAPPIM) has biased composition (pro residues). Residues 574-583 (SPSTEFSTTT) are compositionally biased toward low complexity. Positions 621–657 (CRDMRYSCGFWLKNNKQVCEEQQSFMRAQCAYTCKFC) constitute a ShKT domain. Intrachain disulfides connect Cys-621–Cys-657, Cys-628–Cys-650, and Cys-639–Cys-654.

It belongs to the peptidase M14 family. It depends on Zn(2+) as a cofactor. In terms of tissue distribution, localizes in stripes along the cuticle.

Its subcellular location is the cytoplasmic vesicle. It localises to the secreted. Its function is as follows. May play a role in processing or organization of cuticle collagen proteins, including rol-6 and col-19. The protein is Putative carboxypeptidase suro-1 of Caenorhabditis elegans.